The following is a 351-amino-acid chain: Carbamoyl phosphate synthase small chain (351 aa).

A CPSase region spans residues 1 to 171 (MKGIIYLEDG…IIHIAGNGNK (171 aa)). Positions 45, 219, and 221 each coordinate L-glutamine. The Glutamine amidotransferase type-1 domain occupies 171–351 (KVAVMDFGIK…TYLFDQFVNL (181 aa)). Residue C246 is the Nucleophile of the active site. Positions 247, 250, 288, 290, and 291 each coordinate L-glutamine. Residues H331 and E333 contribute to the active site.

This sequence belongs to the CarA family. In terms of assembly, composed of two chains; the small (or glutamine) chain promotes the hydrolysis of glutamine to ammonia, which is used by the large (or ammonia) chain to synthesize carbamoyl phosphate. Tetramer of heterodimers (alpha,beta)4.

The catalysed reaction is hydrogencarbonate + L-glutamine + 2 ATP + H2O = carbamoyl phosphate + L-glutamate + 2 ADP + phosphate + 2 H(+). The enzyme catalyses L-glutamine + H2O = L-glutamate + NH4(+). It functions in the pathway amino-acid biosynthesis; L-arginine biosynthesis; carbamoyl phosphate from bicarbonate: step 1/1. Its pathway is pyrimidine metabolism; UMP biosynthesis via de novo pathway; (S)-dihydroorotate from bicarbonate: step 1/3. Its function is as follows. Small subunit of the glutamine-dependent carbamoyl phosphate synthetase (CPSase). CPSase catalyzes the formation of carbamoyl phosphate from the ammonia moiety of glutamine, carbonate, and phosphate donated by ATP, constituting the first step of 2 biosynthetic pathways, one leading to arginine and/or urea and the other to pyrimidine nucleotides. The small subunit (glutamine amidotransferase) binds and cleaves glutamine to supply the large subunit with the substrate ammonia. The sequence is that of Carbamoyl phosphate synthase small chain from Clostridium acetobutylicum (strain ATCC 824 / DSM 792 / JCM 1419 / IAM 19013 / LMG 5710 / NBRC 13948 / NRRL B-527 / VKM B-1787 / 2291 / W).